A 251-amino-acid chain; its full sequence is Cell division protein ZapD (251 aa).

Belongs to the ZapD family. Interacts with FtsZ.

It is found in the cytoplasm. Functionally, cell division factor that enhances FtsZ-ring assembly. Directly interacts with FtsZ and promotes bundling of FtsZ protofilaments, with a reduction in FtsZ GTPase activity. The chain is Cell division protein ZapD from Burkholderia lata (strain ATCC 17760 / DSM 23089 / LMG 22485 / NCIMB 9086 / R18194 / 383).